The sequence spans 146 residues: Holo-[acyl-carrier-protein] synthase (146 aa).

The Mg(2+) site is built by aspartate 9 and glutamate 63.

The protein belongs to the P-Pant transferase superfamily. AcpS family. Mg(2+) serves as cofactor.

The protein localises to the cytoplasm. The enzyme catalyses apo-[ACP] + CoA = holo-[ACP] + adenosine 3',5'-bisphosphate + H(+). In terms of biological role, transfers the 4'-phosphopantetheine moiety from coenzyme A to a Ser of acyl-carrier-protein. The sequence is that of Holo-[acyl-carrier-protein] synthase from Burkholderia ambifaria (strain MC40-6).